A 176-amino-acid chain; its full sequence is Large ribosomal subunit protein uL10 (176 aa).

It belongs to the universal ribosomal protein uL10 family. As to quaternary structure, part of the ribosomal stalk of the 50S ribosomal subunit. The N-terminus interacts with L11 and the large rRNA to form the base of the stalk. The C-terminus forms an elongated spine to which L12 dimers bind in a sequential fashion forming a multimeric L10(L12)X complex.

Functionally, forms part of the ribosomal stalk, playing a central role in the interaction of the ribosome with GTP-bound translation factors. The polypeptide is Large ribosomal subunit protein uL10 (Coprothermobacter proteolyticus (strain ATCC 35245 / DSM 5265 / OCM 4 / BT)).